We begin with the raw amino-acid sequence, 103 residues long: Histone H4 (103 aa).

Positions methionine 1–glycine 14 are enriched in gly residues. The tract at residues methionine 1 to arginine 20 is disordered. The DNA-binding element occupies lysine 17–lysine 21.

This sequence belongs to the histone H4 family. The nucleosome is a histone octamer containing two molecules each of H2A, H2B, H3 and H4 assembled in one H3-H4 heterotetramer and two H2A-H2B heterodimers. The octamer wraps approximately 147 bp of DNA.

Its subcellular location is the nucleus. It is found in the chromosome. In terms of biological role, core component of nucleosome. Nucleosomes wrap and compact DNA into chromatin, limiting DNA accessibility to the cellular machineries which require DNA as a template. Histones thereby play a central role in transcription regulation, DNA repair, DNA replication and chromosomal stability. DNA accessibility is regulated via a complex set of post-translational modifications of histones, also called histone code, and nucleosome remodeling. In Eimeria tenella (Coccidian parasite), this protein is Histone H4.